Here is a 401-residue protein sequence, read N- to C-terminus: Argininosuccinate synthase (401 aa).

Residue 9 to 17 (AYSGGLDTS) coordinates ATP. Y86 is an L-citrulline binding site. ATP is bound at residue G116. The L-aspartate site is built by T118, N122, and D123. N122 contacts L-citrulline. Residues R126, S174, S183, E259, and Y271 each coordinate L-citrulline.

This sequence belongs to the argininosuccinate synthase family. Type 1 subfamily. In terms of assembly, homotetramer.

The protein resides in the cytoplasm. The enzyme catalyses L-citrulline + L-aspartate + ATP = 2-(N(omega)-L-arginino)succinate + AMP + diphosphate + H(+). The protein operates within amino-acid biosynthesis; L-arginine biosynthesis; L-arginine from L-ornithine and carbamoyl phosphate: step 2/3. This is Argininosuccinate synthase from Bacillus cereus (strain Q1).